Consider the following 235-residue polypeptide: Ribonuclease PH (235 aa).

Residues R86 and 124-126 (GTR) contribute to the phosphate site.

It belongs to the RNase PH family. Homohexameric ring arranged as a trimer of dimers.

It carries out the reaction tRNA(n+1) + phosphate = tRNA(n) + a ribonucleoside 5'-diphosphate. Functionally, phosphorolytic 3'-5' exoribonuclease that plays an important role in tRNA 3'-end maturation. Removes nucleotide residues following the 3'-CCA terminus of tRNAs; can also add nucleotides to the ends of RNA molecules by using nucleoside diphosphates as substrates, but this may not be physiologically important. Probably plays a role in initiation of 16S rRNA degradation (leading to ribosome degradation) during starvation. The sequence is that of Ribonuclease PH from Legionella pneumophila (strain Paris).